The chain runs to 339 residues: Phosphoribosylformylglycinamidine cyclo-ligase (339 aa).

The protein belongs to the AIR synthase family.

The protein localises to the cytoplasm. It carries out the reaction 2-formamido-N(1)-(5-O-phospho-beta-D-ribosyl)acetamidine + ATP = 5-amino-1-(5-phospho-beta-D-ribosyl)imidazole + ADP + phosphate + H(+). It participates in purine metabolism; IMP biosynthesis via de novo pathway; 5-amino-1-(5-phospho-D-ribosyl)imidazole from N(2)-formyl-N(1)-(5-phospho-D-ribosyl)glycinamide: step 2/2. This Fusobacterium nucleatum subsp. nucleatum (strain ATCC 25586 / DSM 15643 / BCRC 10681 / CIP 101130 / JCM 8532 / KCTC 2640 / LMG 13131 / VPI 4355) protein is Phosphoribosylformylglycinamidine cyclo-ligase.